The primary structure comprises 207 residues: Guanylate kinase (207 aa).

In terms of domain architecture, Guanylate kinase-like spans glycine 4–arginine 184. Alanine 11–serine 18 serves as a coordination point for ATP.

The protein belongs to the guanylate kinase family.

It is found in the cytoplasm. The catalysed reaction is GMP + ATP = GDP + ADP. Its function is as follows. Essential for recycling GMP and indirectly, cGMP. In Aliivibrio fischeri (strain ATCC 700601 / ES114) (Vibrio fischeri), this protein is Guanylate kinase.